Here is a 428-residue protein sequence, read N- to C-terminus: MFVDQVKIYVKGGDGGNGMVAYRREKYVPKGGPAGGDGGKGADVVFVVEEGLRTLMDFRYQRHFKADRGQHGMSKGQHGRKSEDLLVKVPPGTVVKDEKTGQILADLVTHGQTAVIAKGGRGGRGNSRFATATNPAPEIAENGEPGQERDVILELKVLADVGLVGFPSVGKSTLLSVVSSARPKIAEYHFTTIVPNLGVVETGDNRSFVMADLPGLIEGAHAGVGLGHQFLRHIERTRVIVHVIDMSGLEGRDPYEDYVTINNELKEYNLRLTERPQVVVANKMDMPDAEENLQAFKEKVGEEVKIFPISAVTRQGVRDLLFEVANLIETTPEFPIHEVADESDTSVMYKFDTEGVKFEITRESDGTFVISGYDIEKTFKMTDFSRDESVRRFARQMRGMGIDEALRARGAKDGDIVKILEYEFEFID.

One can recognise an Obg domain in the interval 1–158 (MFVDQVKIYV…RDVILELKVL (158 aa)). In terms of domain architecture, OBG-type G spans 159–329 (ADVGLVGFPS…LLFEVANLIE (171 aa)). GTP contacts are provided by residues 165–172 (GFPSVGKS), 190–194 (FTTIV), 212–215 (DLPG), 282–285 (NKMD), and 310–312 (SAV). 2 residues coordinate Mg(2+): serine 172 and threonine 192. The 79-residue stretch at 350-428 (KFDTEGVKFE…ILEYEFEFID (79 aa)) folds into the OCT domain.

This sequence belongs to the TRAFAC class OBG-HflX-like GTPase superfamily. OBG GTPase family. In terms of assembly, monomer. It depends on Mg(2+) as a cofactor.

The protein resides in the cytoplasm. Functionally, an essential GTPase which binds GTP, GDP and possibly (p)ppGpp with moderate affinity, with high nucleotide exchange rates and a fairly low GTP hydrolysis rate. Plays a role in control of the cell cycle, stress response, ribosome biogenesis and in those bacteria that undergo differentiation, in morphogenesis control. The polypeptide is GTPase Obg (Bacillus cereus (strain B4264)).